Consider the following 440-residue polypeptide: 2-phosphinomethylmalate synthase (440 aa).

The Pyruvate carboxyltransferase domain maps to Val-39–Asn-313.

It belongs to the alpha-IPM synthase/homocitrate synthase family. As to quaternary structure, homodimer. Requires Mn(2+) as cofactor. Co(2+) serves as cofactor.

The enzyme catalyses 3-(hydrohydroxyphosphoryl)pyruvate + acetyl-CoA + H2O = phosphinomethylmalate + CoA + H(+). The protein operates within secondary metabolite biosynthesis; bialaphos biosynthesis. With respect to regulation, strongly inhibited by p-chloromercuribenzoate (pCMB), iodoacetamide (IA) and EDTA. Involved in the biosynthesis of phosphinothricin tripeptide (PTT), also known as bialaphos (BA), a natural-product antibiotic and potent herbicide. Catalyzes the condensation berween phosphinopyruvic acid (PPA), an analog of oxalacetic acid, and acetyl-CoA to form R-2-phosphinomethylmalic acid (PMM). Can also act on oxaloacetate, but shows no activity when acetyl-CoA is substituted by propionyl-CoA or butyryl-CoA. This is 2-phosphinomethylmalate synthase from Streptomyces hygroscopicus.